We begin with the raw amino-acid sequence, 150 residues long: Catabolic 3-dehydroquinase 2 (150 aa).

Residue Tyr23 is the Proton acceptor of the active site. Positions 74, 80, and 87 each coordinate substrate. His100 functions as the Proton donor in the catalytic mechanism. Substrate-binding positions include 101–102 (IT) and Arg111.

Belongs to the type-II 3-dehydroquinase family. In terms of assembly, homododecamer. Adopts a ring-like structure, composed of an arrangement of two hexameric rings stacked on top of one another.

It catalyses the reaction 3-dehydroquinate = 3-dehydroshikimate + H2O. Its pathway is aromatic compound metabolism; 3,4-dihydroxybenzoate biosynthesis; 3,4-dihydroxybenzoate from 3-dehydroquinate: step 1/2. Is involved in the catabolism of quinate. Allows the utilization of quinate as carbon source via the beta-ketoadipate pathway. This chain is Catabolic 3-dehydroquinase 2, found in Aspergillus flavus (strain ATCC 200026 / FGSC A1120 / IAM 13836 / NRRL 3357 / JCM 12722 / SRRC 167).